A 445-amino-acid chain; its full sequence is E3 ubiquitin-protein ligase MYLIP (445 aa).

One can recognise an FERM domain in the interval 1–279 (MLCYVTRPDA…ETHAFYRCDT (279 aa)). Residues C360, C363, and C368 each coordinate Fe cation. An RING-type zinc finger spans residues 387-422 (CMVCCEEEINSTFCPCGHTVCCESCAAQLQSCPVCR). The interval 431-433 (VYL) is critical for homodimerization.

Homodimer. Interacts with the E2 ubiquitin-conjugating enzyme, UBE2D1 (via RING-type zinc finger). Interacts with myosin regulatory light chain (MRLC) and TMEM4. In terms of processing, autoubiquitinated. In terms of tissue distribution, ubiquitously expressed.

The protein resides in the cytoplasm. Its subcellular location is the cell membrane. The enzyme catalyses S-ubiquitinyl-[E2 ubiquitin-conjugating enzyme]-L-cysteine + [acceptor protein]-L-lysine = [E2 ubiquitin-conjugating enzyme]-L-cysteine + N(6)-ubiquitinyl-[acceptor protein]-L-lysine.. It functions in the pathway protein modification; protein ubiquitination. Its activity is regulated as follows. Can bind 1 iron ion per dimer. Iron binding seems to decrease LDLR degradation activity. In terms of biological role, E3 ubiquitin-protein ligase that mediates ubiquitination and subsequent proteasomal degradation of myosin regulatory light chain (MRLC), LDLR, VLDLR and LRP8. Activity depends on E2 enzymes of the UBE2D family. Proteasomal degradation of MRLC leads to inhibit neurite outgrowth in presence of NGF by counteracting the stabilization of MRLC by saposin-like protein (CNPY2/MSAP) and reducing CNPY2-stimulated neurite outgrowth. Acts as a sterol-dependent inhibitor of cellular cholesterol uptake by mediating ubiquitination and subsequent degradation of LDLR. In Homo sapiens (Human), this protein is E3 ubiquitin-protein ligase MYLIP (MYLIP).